Reading from the N-terminus, the 245-residue chain is 1-(5-phosphoribosyl)-5-[(5-phosphoribosylamino)methylideneamino] imidazole-4-carboxamide isomerase (245 aa).

Asp8 acts as the Proton acceptor in catalysis. Asp131 acts as the Proton donor in catalysis.

Belongs to the HisA/HisF family.

It localises to the cytoplasm. It carries out the reaction 1-(5-phospho-beta-D-ribosyl)-5-[(5-phospho-beta-D-ribosylamino)methylideneamino]imidazole-4-carboxamide = 5-[(5-phospho-1-deoxy-D-ribulos-1-ylimino)methylamino]-1-(5-phospho-beta-D-ribosyl)imidazole-4-carboxamide. Its pathway is amino-acid biosynthesis; L-histidine biosynthesis; L-histidine from 5-phospho-alpha-D-ribose 1-diphosphate: step 4/9. This Neisseria gonorrhoeae (strain ATCC 700825 / FA 1090) protein is 1-(5-phosphoribosyl)-5-[(5-phosphoribosylamino)methylideneamino] imidazole-4-carboxamide isomerase.